The primary structure comprises 345 residues: Uroporphyrinogen decarboxylase (345 aa).

Substrate-binding positions include 23–27 (RQAGR), Asp73, Tyr149, Thr203, and His319.

Belongs to the uroporphyrinogen decarboxylase family. In terms of assembly, homodimer.

It is found in the cytoplasm. The enzyme catalyses uroporphyrinogen III + 4 H(+) = coproporphyrinogen III + 4 CO2. It functions in the pathway porphyrin-containing compound metabolism; protoporphyrin-IX biosynthesis; coproporphyrinogen-III from 5-aminolevulinate: step 4/4. In terms of biological role, catalyzes the decarboxylation of four acetate groups of uroporphyrinogen-III to yield coproporphyrinogen-III. This Vesicomyosocius okutanii subsp. Calyptogena okutanii (strain HA) protein is Uroporphyrinogen decarboxylase.